A 606-amino-acid chain; its full sequence is Kelch-like protein 41 (606 aa).

At S3 the chain carries Phosphoserine. Residues 33–100 form the BTB domain; that stretch reads IDCTLKAGDK…LYSASIDLND (68 aa). The 103-residue stretch at 135 to 237 folds into the BACK domain; the sequence is CLAILRLGLL…AEKYFKDHVE (103 aa). Kelch repeat units lie at residues 346–398, 399–447, 448–495, 497–542, and 544–599; these read QVYV…EVDD, KIYV…SHNG, MIYC…IHKG, IVIA…SLAG, and LYAI…TRLN.

Interacts with NRAP. Part of a complex that contains CUL3, RBX1 and KLHL41. Interacts with LASP1. Post-translationally, ubiquitinated by E3 ubiquitin ligase complex formed by CUL3 and RBX1 and probably targeted for proteasome-independent degradation. Quinone-induced oxidative stress increases its ubiquitination. Primarily expressed in skeletal muscle. Also found in heart and lung.

The protein resides in the cytoplasm. It localises to the cytoskeleton. It is found in the cell projection. Its subcellular location is the pseudopodium. The protein localises to the ruffle. The protein resides in the myofibril. It localises to the sarcomere. It is found in the m line. Its subcellular location is the sarcoplasmic reticulum membrane. The protein localises to the endoplasmic reticulum membrane. Its function is as follows. Involved in skeletal muscle development and differentiation. Regulates proliferation and differentiation of myoblasts and plays a role in myofibril assembly by promoting lateral fusion of adjacent thin fibrils into mature, wide myofibrils. Required for pseudopod elongation in transformed cells. This Rattus norvegicus (Rat) protein is Kelch-like protein 41 (Klhl41).